A 337-amino-acid polypeptide reads, in one-letter code: Protein FAM169B (337 aa).

Positions 278-326 are disordered; that stretch reads STVHPKCSEEDTDTPGQASQEDGPTQFNHGESHKEWAVGEPERTQNGRR. Polar residues predominate over residues 291–306; sequence TPGQASQEDGPTQFNH. The span at 307-322 shows a compositional bias: basic and acidic residues; that stretch reads GESHKEWAVGEPERTQ.

Belongs to the FAM169 family.

The chain is Protein FAM169B (Fam169b) from Mus musculus (Mouse).